Reading from the N-terminus, the 135-residue chain is HVA22-like protein d (135 aa).

A run of 3 helical transmembrane segments spans residues 11 to 31 (LHSG…SVIA), 42 to 62 (QWLA…ILQS), and 63 to 83 (LIEW…WLVL).

Belongs to the DP1 family. In terms of tissue distribution, predominantly expressed in flower buds.

It is found in the membrane. In Arabidopsis thaliana (Mouse-ear cress), this protein is HVA22-like protein d (HVA22D).